The chain runs to 138 residues: Basic phospholipase A2 ammodytoxin C (138 aa).

A signal peptide spans 1–16; the sequence is MRTLWIVAVCLIGVEG. Disulfide bonds link Cys42/Cys131, Cys44/Cys60, Cys59/Cys111, Cys65/Cys138, Cys66/Cys104, Cys73/Cys97, and Cys91/Cys102. 3 residues coordinate Ca(2+): Tyr43, Gly45, and Gly47. Residue His63 is part of the active site. Ca(2+) is bound at residue Asp64. Asp105 is a catalytic residue.

The protein belongs to the phospholipase A2 family. Group II subfamily. D49 sub-subfamily. As to quaternary structure, monomer. Binds to calmodulin, coagulation factor X (F10), 14-3-3 proteins gamma (YWHAG) and epsilon (YWHAE), and R25, a mitochondrial membrane protein. May bind to M-type PLA2 receptor (R-180). Ca(2+) is required as a cofactor. Expressed by the venom gland.

The protein localises to the secreted. It is found in the host cytoplasm. Its subcellular location is the host cytosol. It catalyses the reaction a 1,2-diacyl-sn-glycero-3-phosphocholine + H2O = a 1-acyl-sn-glycero-3-phosphocholine + a fatty acid + H(+). In terms of biological role, snake venom phospholipase A2 (PLA2) that acts as a presynaptic neurotoxin, an inhibitor of blood coagulation, and has been found to bind with high affinity to intracellular proteins. The response of indirectly stimulated neuromuscular preparations to ammodytoxin (Atx) is triphasic. The first phase, the transient inhibition of the acetylcholine (ACh) release, starts soon after the addition of Atx and lasts for several minutes. This phase is probably independent of Atx enzymatic activity. The effect may be due to the specific binding of the toxin to presynaptic receptors. These receptors, called N-type receptors, are still unidentified. It is noteworthy that a neuronal isoform of the M-type PLA2 receptor (R180) has been identified as a high-affinity receptor for Atx in neuronal plasma membranes. It was demonstrated however that this receptor is not essential for expression of neurotoxicity by Atx. The second phase corresponds to an augmentation of neurotransmitter release. A peak is reached 10-20 minutes after exposure of the preparation to Atx and is followed by a gradual reduction. In this phase, the enzymatic activity of Atx of the mammalian is not significant. It is speculated that the increased release of neurotransmitter in this phase is induced by the interference of Atx with voltage-gated potassium channels. Measurements of ionic showed however that voltage-gated potassium channels are not affected by Atx. The third phase of the response of neuromuscular preparations to Atx, which corresponds to a complete and irreversible paralysis, is clearly dependent on the hydrolytic activity of the toxin. In addition to its presynaptic neurotoxicity, Atx shows an anticoagulant activity by binding with high affinity to activated coagulation factor X (F10) thus inhibiting the formation of the prothrombinase complex (FX/FV) and its activity (IC(50) is 240 nM). Surprisingly, Atx was discovered to bind intracellular proteins such as calmodulin (CaM), 14-3-3 proteins gamma (YWHAG) and epsilon (YWHAE), as well as R25, a mitochondrial integral membrane protein found in cerebral cortex. These findings raised a doubt about the dogma of the exclusively extracellular action of PLA2s, defended by the potential instability of these molecules in the reducing environment of the eukaryotic cytosol coupled with their possible inability to act as enzymes in this cellular compartment, due to too low concentration of calcium ions. This hypothesis was challenged efficiently by demonstrating the internalization of AtxA into a culture cells, but still remains to be directly demonstrated in vivo. PLA2 catalyzes the calcium-dependent hydrolysis of the 2-acyl groups in 3-sn-phosphoglycerides. The sequence is that of Basic phospholipase A2 ammodytoxin C from Vipera ammodytes ammodytes (Western sand viper).